Reading from the N-terminus, the 293-residue chain is Eukaryotic translation initiation factor 3 subunit F (293 aa).

N-acetylalanine is present on Ala-2. In terms of domain architecture, MPN spans 28–159; it reads ARIHPLVIFN…IKAFVSSNLS (132 aa).

The protein belongs to the eIF-3 subunit F family. Component of the eukaryotic translation initiation factor 3 (eIF-3) complex. Binds to TIF3E1 and TIF3H1. Expressed in inflorescences, leaves, stems, siliques, roots and seedlings. Accumulates at highly levels in pollen grains, developing embryos and root tips.

The protein localises to the cytoplasm. In terms of biological role, component of the eukaryotic translation initiation factor 3 (eIF-3) complex, which is involved in protein synthesis of a specialized repertoire of mRNAs and, together with other initiation factors, stimulates binding of mRNA and methionyl-tRNAi to the 40S ribosome. The eIF-3 complex specifically targets and initiates translation of a subset of mRNAs involved in cell proliferation (Potential). Involved in cell growth and differentiation, especially during embryogenesis and male gametophyte germination. Regulates sensitivity to sugars (e.g. sucrose). In Arabidopsis thaliana (Mouse-ear cress), this protein is Eukaryotic translation initiation factor 3 subunit F (TIF3F1).